Here is an 893-residue protein sequence, read N- to C-terminus: Major vault protein (893 aa).

Ala-2 carries the N-acetylalanine modification. 9 MVP repeats span residues 2–56 (ATEE…VPPR), 57–111 (HYCT…DITP), 112–164 (LQVV…EIIQ), 165–217 (ATII…DLVD), 218–272 (AVIL…GVVP), 273–323 (ITTL…IQDV), 324–379 (YVLS…ERQA), 380–457 (IPLD…KTRV), and 458–520 (VSYR…LLGP). Lys-444 is covalently cross-linked (Glycyl lysine isopeptide (Lys-Gly) (interchain with G-Cter in SUMO2)). Residue Ser-445 is modified to Phosphoserine. A Glycyl lysine isopeptide (Lys-Gly) (interchain with G-Cter in SUMO2) cross-link involves residue Lys-704. Residues 856 to 893 (QPLGRRVASGPSPGEGISPQSAQAPQAPGDNHVVPVLR) are disordered.

As to quaternary structure, the vault ribonucleoprotein particle is a huge (400 A x 670 A) cage structure of 12.9 MDa. It consists of a dimer of half-vaults, with each half-vault comprising 39 identical major vault protein (MVP) chains, PARP4 and one or more vault RNAs (vRNAs). Interacts with TEP1. Interacts with PTEN and activated MAPK1. The phosphorylated protein interacts with the SH2 domains of PTPN11 and SRC. Interacts with APEX1. May interact with ZNF540. Phosphorylated on Tyr residues after EGF stimulation. In terms of processing, dephosphorylated by PTPN11.

The protein resides in the cytoplasm. It is found in the nucleus. Its function is as follows. Required for normal vault structure. Vaults are multi-subunit structures that may act as scaffolds for proteins involved in signal transduction. Vaults may also play a role in nucleo-cytoplasmic transport. Down-regulates IFNG-mediated STAT1 signaling and subsequent activation of JAK. Down-regulates SRC activity and signaling through MAP kinases. This is Major vault protein (MVP) from Pongo abelii (Sumatran orangutan).